Here is a 530-residue protein sequence, read N- to C-terminus: Ubiquitin carboxyl-terminal hydrolase 17-like protein 5 (530 aa).

Residues 80–375 (AGLQNMGNTC…QAYVLFYIQK (296 aa)) form the USP domain. Residue cysteine 89 is the Nucleophile of the active site. Histidine 334 serves as the catalytic Proton acceptor. 2 stretches are compositionally biased toward basic and acidic residues: residues 382–392 (SESVSRGREPR) and 398–412 (DTDR…KRDH). Disordered regions lie at residues 382-412 (SESV…KRDH) and 477-530 (NHHP…LVCQ). The segment covering 493–505 (TPTHQESMNTGTL) has biased composition (polar residues). Residues 510 to 524 (GRARRSKGKNKHSKR) are compositionally biased toward basic residues.

Belongs to the peptidase C19 family. USP17 subfamily.

It localises to the nucleus. The protein resides in the endoplasmic reticulum. It catalyses the reaction Thiol-dependent hydrolysis of ester, thioester, amide, peptide and isopeptide bonds formed by the C-terminal Gly of ubiquitin (a 76-residue protein attached to proteins as an intracellular targeting signal).. In terms of biological role, deubiquitinating enzyme that removes conjugated ubiquitin from specific proteins to regulate different cellular processes that may include cell proliferation, progression through the cell cycle, apoptosis, cell migration, and the cellular response to viral infection. In Homo sapiens (Human), this protein is Ubiquitin carboxyl-terminal hydrolase 17-like protein 5 (USP17L5).